We begin with the raw amino-acid sequence, 208 residues long: Methyl-CpG-binding domain protein 3-like 2 (208 aa).

Positions Met-1–Ala-89 are interacts with MBD3.

The protein belongs to the MBD3L family. As to quaternary structure, interacts (via N-terminus) with MBD3; the interaction is direct. Interacts with MTA1. Interacts with HDAC1. Interacts with HDAC2. Interacts with RBBP4. Interacts with RBBP7. As to expression, detected at low levels in several somatic tissues. Highly expressed in the ovarian teratocarcinoma cell line PA-1.

It is found in the nucleus. May displace the NuRD complex from chromatin. The polypeptide is Methyl-CpG-binding domain protein 3-like 2 (MBD3L2) (Homo sapiens (Human)).